Consider the following 189-residue polypeptide: Threonylcarbamoyl-AMP synthase (189 aa).

Residues 3-189 (TTSVTEAAEC…NALTGEVIRP (187 aa)) enclose the YrdC-like domain.

It belongs to the SUA5 family. TsaC subfamily.

The protein resides in the cytoplasm. The enzyme catalyses L-threonine + hydrogencarbonate + ATP = L-threonylcarbamoyladenylate + diphosphate + H2O. In terms of biological role, required for the formation of a threonylcarbamoyl group on adenosine at position 37 (t(6)A37) in tRNAs that read codons beginning with adenine. Catalyzes the conversion of L-threonine, HCO(3)(-)/CO(2) and ATP to give threonylcarbamoyl-AMP (TC-AMP) as the acyladenylate intermediate, with the release of diphosphate. The sequence is that of Threonylcarbamoyl-AMP synthase from Acinetobacter baumannii (strain ACICU).